Here is a 156-residue protein sequence, read N- to C-terminus: Male-specific protein scotti (156 aa).

Positions 26 to 48 (TADAGDDADTLEDGQQQQQQQHQ) are disordered. Asn-137 carries an N-linked (GlcNAc...) asparagine glycan.

The protein belongs to the male-specific scotti family.

Its function is as follows. Post-meiotically transcribed gene that has a role in late spermiogenesis; required for actin cone progression during spermatid individualization. The chain is Male-specific protein scotti from Drosophila erecta (Fruit fly).